The primary structure comprises 83 residues: MKNKNMNPSRPRLLCLIVFLFLVIVLSKASRIHVERRRFSSKPSGENREFLPSQPTFPVVDAGEILPDKRKVKTGSNPLHNKR.

A signal peptide spans 1-29 (MKNKNMNPSRPRLLCLIVFLFLVIVLSKA).

This sequence belongs to the CLV3/ESR signal peptide family. In terms of tissue distribution, mostly expressed in roots, seedlings, leaves, flowers, stems and apex, and, to a lower extent, in siliques and pollen.

The protein localises to the secreted. Its subcellular location is the extracellular space. Functionally, extracellular signal peptide that regulates cell fate. Represses root apical meristem maintenance. Inhibits irreversibly root growth by reducing cell division rates in the root apical meristem. Regulates the transition of protophloem cells from proliferation to differentiation, thus impinging on postembryonic growth capacity of the root meristem; this signaling pathway requires CRN and CLV2. This is CLAVATA3/ESR (CLE)-related protein 20 from Arabidopsis thaliana (Mouse-ear cress).